The chain runs to 443 residues: MFLAQEIIRKKRNAEALSKEEIQFFVKGITDNTVSEGQIAALGMAVYFNDMNMDERIALTTSMRDSGTVLDWQSLDLNGPIIDKHSTGGVGDVISLMLGPMAAACGGYVPMISGRGLGHTGGTLDKFDAIPGYQTEPDSALFRKVVKEAGVAIIGQTGDLVPADKRFYSIRDNTATVESISLITASILSKKLAAGLDALAMDVKVGSGAFMPTYEASEELARSITAVANGAGTKTTALLTDMNQVLASCAGNAVEVKEAIDFLTGRYRNPRLYEVTMGLCAEMLMLGGIASTETQAREKLNAVLDNGKAAEIFGRMISGLGGPTDFVENPGLYLPESKIIRPVYAEQTGFATSMDTRELGLAVVTLGGGRRKPGDALDYSVGLTQVCALGDEISKDKPIAMIHAQTETAFAEAERAVRKAIHIGDSRPEKTPEIYRYIRASDL.

It belongs to the thymidine/pyrimidine-nucleoside phosphorylase family. In terms of assembly, homodimer.

The catalysed reaction is thymidine + phosphate = 2-deoxy-alpha-D-ribose 1-phosphate + thymine. The protein operates within pyrimidine metabolism; dTMP biosynthesis via salvage pathway; dTMP from thymine: step 1/2. Functionally, the enzymes which catalyze the reversible phosphorolysis of pyrimidine nucleosides are involved in the degradation of these compounds and in their utilization as carbon and energy sources, or in the rescue of pyrimidine bases for nucleotide synthesis. In Shewanella woodyi (strain ATCC 51908 / MS32), this protein is Thymidine phosphorylase.